The sequence spans 342 residues: Serpentine receptor class beta-16 (342 aa).

The Extracellular portion of the chain corresponds to 1–22 (MDRELIEICKENSATAFSVGYQ). Residues 23-43 (IVYLIYVVLSVTSIFTCSYFI) form a helical membrane-spanning segment. Residues 44 to 61 (KTFIWNSTFHPNFKLLLT) lie on the Cytoplasmic side of the membrane. The chain crosses the membrane as a helical span at residues 62-82 (MYFFAAIFHSFLFTASYLMMI). The Extracellular portion of the chain corresponds to 83-102 (ERFLDYQTDCDIHVSMVPYA). Residues 103 to 123 (IVHSSIACCLFCGMLTQVFMV) traverse the membrane as a helical segment. The Cytoplasmic portion of the chain corresponds to 124 to 141 (IERLLATIKIESYEHNTS). Residues 142-162 (FWHILAYLFFCIVLPLSLLVW) traverse the membrane as a helical segment. Topologically, residues 163–187 (AYQDADYNSPVITAISPPKGVEIRL) are extracellular. The helical transmembrane segment at 188 to 208 (NILYIFCFFLAILALILLQVV) threads the bilayer. Topologically, residues 209-237 (RFVNKRRESRIEISLSGRFQIVENIDTTT) are cytoplasmic. A helical membrane pass occupies residues 238–258 (FISSILIINMIMSVIYIVGTF). Residues 259 to 274 (TLRNFQFDAFINNQPA) lie on the Extracellular side of the membrane. Residues 275 to 295 (LATVKTIFYLHPLFSFLMPLI) traverse the membrane as a helical segment. Over 296-342 (SSYHLSKMRERRVKRREHLMAIKTKGREGSDAYNQLLHDQWTQHFLK) the chain is Cytoplasmic.

This sequence belongs to the nematode receptor-like protein srb family. Expressed throughout the nervous system, in pharyngeal muscle, hermaphrodite vulval muscles and in the male tail. Not expressed in male somatic gonads or sperm.

The protein resides in the cell membrane. It is found in the perikaryon. Its subcellular location is the cell projection. The protein localises to the dendrite. G-protein coupled receptor. Plays a role in the navigational capacity of sperm and promotes the targeting of sperm derived from males to the fertilization site in the uterus of hermaphrodites. This chain is Serpentine receptor class beta-16, found in Caenorhabditis elegans.